The following is a 721-amino-acid chain: Polyribonucleotide nucleotidyltransferase (721 aa).

2 residues coordinate Mg(2+): Asp-495 and Asp-501. One can recognise a KH domain in the interval Pro-562–Ile-621. Positions Gly-631–Arg-699 constitute an S1 motif domain. A disordered region spans residues Gly-700–Ser-721.

The protein belongs to the polyribonucleotide nucleotidyltransferase family. Requires Mg(2+) as cofactor.

The protein localises to the cytoplasm. It catalyses the reaction RNA(n+1) + phosphate = RNA(n) + a ribonucleoside 5'-diphosphate. Involved in mRNA degradation. Catalyzes the phosphorolysis of single-stranded polyribonucleotides processively in the 3'- to 5'-direction. This chain is Polyribonucleotide nucleotidyltransferase, found in Synechococcus sp. (strain CC9311).